A 466-amino-acid polypeptide reads, in one-letter code: Uronate isomerase (466 aa).

This sequence belongs to the metallo-dependent hydrolases superfamily. Uronate isomerase family.

The catalysed reaction is D-glucuronate = D-fructuronate. The enzyme catalyses aldehydo-D-galacturonate = keto-D-tagaturonate. It functions in the pathway carbohydrate metabolism; pentose and glucuronate interconversion. The chain is Uronate isomerase from Streptococcus pneumoniae (strain 70585).